A 227-amino-acid polypeptide reads, in one-letter code: TKPGYINAAFRSSKNNEAYFFINDKYVLLDYAPGSSRDKVLYGPTPVRDGFKSLNQTIFGSYGIDCSFDTENNEAFIFYENFCALIDYAPHSKKDKIILGPKKIADVFPFFEGTVFESGIDAAYRSTRGKEVYLFKGDQYARIDYGSNSMVNKEIKSISSGYPCFRNTIFESGADAAFASHKTNEVYFFKDDHYARVKVTPGGKLAIMDGVREIVDYWPSLKDIVPL.

4 Hemopexin repeats span residues 3 to 46 (PGYI…GPTP), 61 to 111 (SYGI…FPFF), 117 to 165 (ESGI…YPCF), and 171 to 221 (ESGA…WPSL). Ca(2+) is bound by residues Asn-7 and Asp-65. Position 118 (Ser-118) interacts with spermine. Ca(2+) is bound by residues Asp-121 and Asp-175.

In terms of assembly, monomer and homodimer. Dimers are prevalent in solution.

The protein resides in the cytoplasm. It is found in the cytosol. In terms of biological role, may play a role in response to oxidative stress and polyamine biosynthesis. The monomeric form binds one hemin per monomer. In the dimeric form, about half of the dimers bind one molecule of spermine each under physiological conditions. Ligand binding is mutually exclusive as binding of hemin leads to dissociation of the dimer. This is Albumin-2 from Lathyrus sativus (White vetchling).